Reading from the N-terminus, the 209-residue chain is Thiamine-phosphate synthase (209 aa).

4-amino-2-methyl-5-(diphosphooxymethyl)pyrimidine is bound by residues 35–39 (QLRNK) and N67. Residues D68 and D87 each contribute to the Mg(2+) site. Residue S106 participates in 4-amino-2-methyl-5-(diphosphooxymethyl)pyrimidine binding. 132-134 (TGS) is a 2-[(2R,5Z)-2-carboxy-4-methylthiazol-5(2H)-ylidene]ethyl phosphate binding site. Residue K135 participates in 4-amino-2-methyl-5-(diphosphooxymethyl)pyrimidine binding. 2-[(2R,5Z)-2-carboxy-4-methylthiazol-5(2H)-ylidene]ethyl phosphate-binding positions include G163 and 183 to 184 (IS).

This sequence belongs to the thiamine-phosphate synthase family. Mg(2+) serves as cofactor.

The enzyme catalyses 2-[(2R,5Z)-2-carboxy-4-methylthiazol-5(2H)-ylidene]ethyl phosphate + 4-amino-2-methyl-5-(diphosphooxymethyl)pyrimidine + 2 H(+) = thiamine phosphate + CO2 + diphosphate. The catalysed reaction is 2-(2-carboxy-4-methylthiazol-5-yl)ethyl phosphate + 4-amino-2-methyl-5-(diphosphooxymethyl)pyrimidine + 2 H(+) = thiamine phosphate + CO2 + diphosphate. It catalyses the reaction 4-methyl-5-(2-phosphooxyethyl)-thiazole + 4-amino-2-methyl-5-(diphosphooxymethyl)pyrimidine + H(+) = thiamine phosphate + diphosphate. It participates in cofactor biosynthesis; thiamine diphosphate biosynthesis; thiamine phosphate from 4-amino-2-methyl-5-diphosphomethylpyrimidine and 4-methyl-5-(2-phosphoethyl)-thiazole: step 1/1. Its function is as follows. Condenses 4-methyl-5-(beta-hydroxyethyl)thiazole monophosphate (THZ-P) and 2-methyl-4-amino-5-hydroxymethyl pyrimidine pyrophosphate (HMP-PP) to form thiamine monophosphate (TMP). This is Thiamine-phosphate synthase from Chlorobium phaeovibrioides (strain DSM 265 / 1930) (Prosthecochloris vibrioformis (strain DSM 265)).